Consider the following 112-residue polypeptide: Signal peptidase complex-like protein DTM1 (112 aa).

Positions 1 to 25 (MGRDEMLRRSLVALAAAVVVTGVVT) are cleaved as a signal peptide. 2 helical membrane-spanning segments follow: residues 33-53 (ATYG…WEFF) and 92-112 (MAML…YVSS).

It belongs to the SPCS1 family.

It localises to the endoplasmic reticulum membrane. Functions in tapetum development during early meiosis. May play a role in the endoplasmic reticulum (ER) membrane in the early stages of tapetum development in anthers. Seems to function after MSP1 and before UDT1. The polypeptide is Signal peptidase complex-like protein DTM1 (Oryza sativa subsp. japonica (Rice)).